A 352-amino-acid chain; its full sequence is Pyruvate dehydrogenase E1 component subunit beta, mitochondrial (352 aa).

The transit peptide at 1 to 21 directs the protein to the mitochondrion; that stretch reads MALRKCGNLFVARLAGTSTRA. Position 81 (glutamate 81) interacts with thiamine diphosphate. 5 residues coordinate K(+): isoleucine 134, alanine 182, isoleucine 183, aspartate 185, and asparagine 187.

As to quaternary structure, tetramer of 2 alpha and 2 beta subunits. The cofactor is thiamine diphosphate.

Its subcellular location is the mitochondrion matrix. It carries out the reaction N(6)-[(R)-lipoyl]-L-lysyl-[protein] + pyruvate + H(+) = N(6)-[(R)-S(8)-acetyldihydrolipoyl]-L-lysyl-[protein] + CO2. Its function is as follows. The pyruvate dehydrogenase complex catalyzes the overall conversion of pyruvate to acetyl-CoA and CO(2). It contains multiple copies of three enzymatic components: pyruvate dehydrogenase (E1), dihydrolipoamide acetyltransferase (E2) and lipoamide dehydrogenase (E3). This is Pyruvate dehydrogenase E1 component subunit beta, mitochondrial (pdhb-1) from Caenorhabditis elegans.